A 239-amino-acid chain; its full sequence is Probable transcriptional regulatory protein BLi00754/BL02339 (239 aa).

The protein belongs to the TACO1 family. YeeN subfamily.

It localises to the cytoplasm. This Bacillus licheniformis (strain ATCC 14580 / DSM 13 / JCM 2505 / CCUG 7422 / NBRC 12200 / NCIMB 9375 / NCTC 10341 / NRRL NRS-1264 / Gibson 46) protein is Probable transcriptional regulatory protein BLi00754/BL02339.